Consider the following 116-residue polypeptide: UPF0342 protein LBA1592 (116 aa).

Belongs to the UPF0342 family.

This chain is UPF0342 protein LBA1592, found in Lactobacillus acidophilus (strain ATCC 700396 / NCK56 / N2 / NCFM).